The chain runs to 61 residues: Small ribosomal subunit protein uS14 (61 aa).

Positions 24, 27, 40, and 43 each coordinate Zn(2+).

This sequence belongs to the universal ribosomal protein uS14 family. Zinc-binding uS14 subfamily. As to quaternary structure, part of the 30S ribosomal subunit. Contacts proteins S3 and S10. Requires Zn(2+) as cofactor.

Its function is as follows. Binds 16S rRNA, required for the assembly of 30S particles and may also be responsible for determining the conformation of the 16S rRNA at the A site. The sequence is that of Small ribosomal subunit protein uS14 from Staphylococcus aureus (strain USA300 / TCH1516).